Reading from the N-terminus, the 469-residue chain is Adenosylhomocysteinase (469 aa).

Substrate is bound by residues T63, D139, and E164. 165 to 167 (TTT) lines the NAD(+) pocket. Substrate is bound by residues K194 and D198. Residues N199, 228–233 (GYGDVG), E251, N300, 321–323 (IGH), and N375 contribute to the NAD(+) site.

It belongs to the adenosylhomocysteinase family. NAD(+) is required as a cofactor.

It is found in the cytoplasm. It carries out the reaction S-adenosyl-L-homocysteine + H2O = L-homocysteine + adenosine. The protein operates within amino-acid biosynthesis; L-homocysteine biosynthesis; L-homocysteine from S-adenosyl-L-homocysteine: step 1/1. Functionally, may play a key role in the regulation of the intracellular concentration of adenosylhomocysteine. This chain is Adenosylhomocysteinase, found in Pseudomonas entomophila (strain L48).